The primary structure comprises 215 residues: Cytochrome b6 (215 aa).

A helical transmembrane segment spans residues 32 to 52 (IFYCLGGIVFVSFLIQVATGF). Cysteine 35 is a binding site for heme c. Positions 86 and 100 each coordinate heme b. 3 helical membrane passes run 90–110 (ASMM…TGGF), 116–136 (LTWV…VTGY), and 186–206 (LHTF…FLMI). Heme b contacts are provided by histidine 187 and histidine 202.

It belongs to the cytochrome b family. PetB subfamily. In terms of assembly, the 4 large subunits of the cytochrome b6-f complex are cytochrome b6, subunit IV (17 kDa polypeptide, PetD), cytochrome f and the Rieske protein, while the 4 small subunits are PetG, PetL, PetM and PetN. The complex functions as a dimer. Requires heme b as cofactor. It depends on heme c as a cofactor.

The protein resides in the plastid. It localises to the chloroplast thylakoid membrane. Component of the cytochrome b6-f complex, which mediates electron transfer between photosystem II (PSII) and photosystem I (PSI), cyclic electron flow around PSI, and state transitions. This Porphyra purpurea (Red seaweed) protein is Cytochrome b6.